The sequence spans 386 residues: Uroporphyrinogen decarboxylase (386 aa).

8 residues coordinate coproporphyrinogen I: Arg-44, Ala-46, Arg-48, Arg-57, Asp-93, Tyr-170, Ser-225, and His-364. The coproporphyrinogen III site is built by Arg-44, Ala-46, and Arg-48. Coproporphyrinogen III contacts are provided by Asp-93, Tyr-170, Ser-225, and His-364.

The protein belongs to the uroporphyrinogen decarboxylase family. As to quaternary structure, homodimer.

The protein localises to the cytoplasm. It localises to the cytosol. It carries out the reaction uroporphyrinogen III + 4 H(+) = coproporphyrinogen III + 4 CO2. Its pathway is porphyrin-containing compound metabolism; protoporphyrin-IX biosynthesis; coproporphyrinogen-III from 5-aminolevulinate: step 4/4. Catalyzes the decarboxylation of four acetate groups of uroporphyrinogen-III to yield coproporphyrinogen-III. This chain is Uroporphyrinogen decarboxylase, found in Drosophila virilis (Fruit fly).